The primary structure comprises 457 residues: Siroheme synthase (457 aa).

The interval 1 to 204 is precorrin-2 dehydrogenase /sirohydrochlorin ferrochelatase; the sequence is MDHLPIFCQL…ADEKAVNATT (204 aa). NAD(+) contacts are provided by residues 22 to 23 and 43 to 44; these read DV and LT. Phosphoserine is present on S128. Residues 216-457 form a uroporphyrinogen-III C-methyltransferase region; that stretch reads GEVVLVGAGP…RDKLNWFSNY (242 aa). Position 225 (P225) interacts with S-adenosyl-L-methionine. D248 acts as the Proton acceptor in catalysis. Catalysis depends on K270, which acts as the Proton donor. S-adenosyl-L-methionine contacts are provided by residues 301–303, I306, 331–332, M382, and G411; these read GGD and TA.

The protein in the N-terminal section; belongs to the precorrin-2 dehydrogenase / sirohydrochlorin ferrochelatase family. In the C-terminal section; belongs to the precorrin methyltransferase family.

The catalysed reaction is uroporphyrinogen III + 2 S-adenosyl-L-methionine = precorrin-2 + 2 S-adenosyl-L-homocysteine + H(+). It catalyses the reaction precorrin-2 + NAD(+) = sirohydrochlorin + NADH + 2 H(+). It carries out the reaction siroheme + 2 H(+) = sirohydrochlorin + Fe(2+). The protein operates within cofactor biosynthesis; adenosylcobalamin biosynthesis; precorrin-2 from uroporphyrinogen III: step 1/1. Its pathway is cofactor biosynthesis; adenosylcobalamin biosynthesis; sirohydrochlorin from precorrin-2: step 1/1. It functions in the pathway porphyrin-containing compound metabolism; siroheme biosynthesis; precorrin-2 from uroporphyrinogen III: step 1/1. It participates in porphyrin-containing compound metabolism; siroheme biosynthesis; siroheme from sirohydrochlorin: step 1/1. The protein operates within porphyrin-containing compound metabolism; siroheme biosynthesis; sirohydrochlorin from precorrin-2: step 1/1. In terms of biological role, multifunctional enzyme that catalyzes the SAM-dependent methylations of uroporphyrinogen III at position C-2 and C-7 to form precorrin-2 via precorrin-1. Then it catalyzes the NAD-dependent ring dehydrogenation of precorrin-2 to yield sirohydrochlorin. Finally, it catalyzes the ferrochelation of sirohydrochlorin to yield siroheme. The chain is Siroheme synthase from Salmonella gallinarum (strain 287/91 / NCTC 13346).